Consider the following 320-residue polypeptide: Protease HtpX homolog (320 aa).

A run of 2 helical transmembrane segments spans residues 6–26 (TAML…LIGG) and 28–48 (AGMM…YWNS). Position 130 (His130) interacts with Zn(2+). Glu131 is a catalytic residue. His134 contacts Zn(2+). The next 2 helical transmembrane spans lie at 145-165 (ITAT…FFGG) and 173-193 (PLGF…AMLV). Glu202 provides a ligand contact to Zn(2+). A disordered region spans residues 281-320 (GGMNVSTPPVRAANPSRKSRSVPDTGLGRGGSQPPKGPWS).

This sequence belongs to the peptidase M48B family. The cofactor is Zn(2+).

It localises to the cell inner membrane. This is Protease HtpX homolog from Rhizobium leguminosarum bv. trifolii (strain WSM2304).